The chain runs to 533 residues: Glucose-6-phosphate isomerase (533 aa).

Residue glutamate 330 is the Proton donor of the active site. Residues histidine 359 and lysine 461 contribute to the active site.

This sequence belongs to the GPI family.

Its subcellular location is the cytoplasm. It carries out the reaction alpha-D-glucose 6-phosphate = beta-D-fructose 6-phosphate. It functions in the pathway carbohydrate biosynthesis; gluconeogenesis. The protein operates within carbohydrate degradation; glycolysis; D-glyceraldehyde 3-phosphate and glycerone phosphate from D-glucose: step 2/4. Its function is as follows. Catalyzes the reversible isomerization of glucose-6-phosphate to fructose-6-phosphate. The protein is Glucose-6-phosphate isomerase of Prochlorococcus marinus (strain SARG / CCMP1375 / SS120).